The primary structure comprises 512 residues: AMP phosphorylase (512 aa).

AMP contacts are provided by residues glycine 166, 192 to 197, and threonine 201; that span reads SRAITG. The active-site Proton donor is the aspartate 254. AMP is bound by residues serine 262 and lysine 286.

It belongs to the thymidine/pyrimidine-nucleoside phosphorylase family. Type 2 subfamily.

The catalysed reaction is AMP + phosphate = alpha-D-ribose 1,5-bisphosphate + adenine. It catalyses the reaction CMP + phosphate = cytosine + alpha-D-ribose 1,5-bisphosphate. The enzyme catalyses UMP + phosphate = alpha-D-ribose 1,5-bisphosphate + uracil. Functionally, catalyzes the conversion of AMP and phosphate to adenine and ribose 1,5-bisphosphate (R15P). Exhibits phosphorylase activity toward CMP and UMP in addition to AMP. Functions in an archaeal AMP degradation pathway, together with R15P isomerase and RubisCO. The protein is AMP phosphorylase of Methanothrix thermoacetophila (strain DSM 6194 / JCM 14653 / NBRC 101360 / PT) (Methanosaeta thermophila).